Consider the following 546-residue polypeptide: Chaperonin GroEL (546 aa).

ATP is bound by residues 30 to 33, K51, 87 to 91, G415, 479 to 481, and D495; these read TLGP, DGTTT, and NAA.

Belongs to the chaperonin (HSP60) family. As to quaternary structure, forms a cylinder of 14 subunits composed of two heptameric rings stacked back-to-back. Interacts with the co-chaperonin GroES.

The protein localises to the cytoplasm. The catalysed reaction is ATP + H2O + a folded polypeptide = ADP + phosphate + an unfolded polypeptide.. Together with its co-chaperonin GroES, plays an essential role in assisting protein folding. The GroEL-GroES system forms a nano-cage that allows encapsulation of the non-native substrate proteins and provides a physical environment optimized to promote and accelerate protein folding. The sequence is that of Chaperonin GroEL from Pseudomonas entomophila (strain L48).